Consider the following 426-residue polypeptide: Protein FAM181B (426 aa).

Disordered regions lie at residues 106 to 157 (GLMG…AAAA) and 226 to 246 (NLPP…CGPS). Low complexity predominate over residues 128-141 (PLAAPSAPTVAAPA).

Belongs to the FAM181 family.

The protein is Protein FAM181B (FAM181B) of Homo sapiens (Human).